Consider the following 443-residue polypeptide: MESLAALYKNHIVTLQERTRDALARFKLDALLIHSGELINVFLDDHPYPFKVNPQFKAWVPVTQVPNCWLLVDGVNKPKLWFYLPVDYWHNVEPLPTSFWTEEVEVIALPKADGIGSQLPAARGNIGYIGPVPERALQLDIAASNINPKGVIDYLHYYRAYKTDYELACMREAQKTAVNGHRAAEEAFRSGMSEFDINLAYLTATGHRDTDVPYSNIVALNEHASVLHYTKLDHRAPSEMRSFLLDAGAEYNGYAADLTRTWAANNDTDYAQLIKDVNDEQLALIATMKAGVSYVDYHIQFHQRIAKLLRKHQIVTDISEEAMVENNLTGPFMPHGIGHQLGLQVHDVAGFMQDDTGTHLAAPSKYPYLRCTRVLQPRMVLTIEPGIYFIESLLAPWREGQFSKHFNWQKIEALKPFGGIRIEDNVVIHENGVENMTRDLKLA.

Residues D246, D257, H339, E384, and E423 each coordinate Mn(2+).

This sequence belongs to the peptidase M24B family. Bacterial-type prolidase subfamily. The cofactor is Mn(2+).

The enzyme catalyses Xaa-L-Pro dipeptide + H2O = an L-alpha-amino acid + L-proline. Splits dipeptides with a prolyl residue in the C-terminal position. The chain is Xaa-Pro dipeptidase from Citrobacter koseri (strain ATCC BAA-895 / CDC 4225-83 / SGSC4696).